Reading from the N-terminus, the 183-residue chain is Acyl-homoserine-lactone synthase (183 aa).

The protein belongs to the autoinducer synthase family.

The catalysed reaction is a fatty acyl-[ACP] + S-adenosyl-L-methionine = an N-acyl-L-homoserine lactone + S-methyl-5'-thioadenosine + holo-[ACP] + H(+). Involved in the synthesis of the acyl-homoserine lactone (AHL) signal N-(3-hydroxydodecanoyl)-L-HSL (3-hydroxy-C(12)-HSL or OH-dDHL). Probably part of a quorum-sensing system with AnoR. The chain is Acyl-homoserine-lactone synthase from Acinetobacter nosocomialis.